Consider the following 31-residue polypeptide: Cyclotide mden-J (31 aa).

Residues 1–31 (GSIPCGESCVYIPCISSIVGCACKSKVCYKN) constitute a cross-link (cyclopeptide (Gly-Asn)). 3 disulfide bridges follow: C5-C21, C9-C23, and C14-C28.

This sequence belongs to the cyclotide family. Bracelet subfamily. In terms of processing, this is a cyclic peptide.

In terms of biological role, probably participates in a plant defense mechanism. This chain is Cyclotide mden-J, found in Melicytus dentatus (Tree violet).